The following is a 210-amino-acid chain: Na(+)-translocating NADH-quinone reductase subunit D (210 aa).

6 helical membrane passes run 42–62 (VVMT…ISTI), 66–86 (IPNS…VIVV), 103–123 (VYVG…AFAM), 131–151 (FMDG…VGAF), 154–174 (LFGS…NGGW), and 178–198 (NGLL…IWAV).

Belongs to the NqrDE/RnfAE family. In terms of assembly, composed of six subunits; NqrA, NqrB, NqrC, NqrD, NqrE and NqrF.

It is found in the cell inner membrane. It catalyses the reaction a ubiquinone + n Na(+)(in) + NADH + H(+) = a ubiquinol + n Na(+)(out) + NAD(+). NQR complex catalyzes the reduction of ubiquinone-1 to ubiquinol by two successive reactions, coupled with the transport of Na(+) ions from the cytoplasm to the periplasm. NqrA to NqrE are probably involved in the second step, the conversion of ubisemiquinone to ubiquinol. The chain is Na(+)-translocating NADH-quinone reductase subunit D from Psychromonas ingrahamii (strain DSM 17664 / CCUG 51855 / 37).